A 252-amino-acid chain; its full sequence is Imidazole glycerol phosphate synthase subunit HisF (252 aa).

Active-site residues include Asp-13 and Asp-132.

Belongs to the HisA/HisF family. In terms of assembly, heterodimer of HisH and HisF.

It localises to the cytoplasm. The catalysed reaction is 5-[(5-phospho-1-deoxy-D-ribulos-1-ylimino)methylamino]-1-(5-phospho-beta-D-ribosyl)imidazole-4-carboxamide + L-glutamine = D-erythro-1-(imidazol-4-yl)glycerol 3-phosphate + 5-amino-1-(5-phospho-beta-D-ribosyl)imidazole-4-carboxamide + L-glutamate + H(+). It participates in amino-acid biosynthesis; L-histidine biosynthesis; L-histidine from 5-phospho-alpha-D-ribose 1-diphosphate: step 5/9. Its function is as follows. IGPS catalyzes the conversion of PRFAR and glutamine to IGP, AICAR and glutamate. The HisF subunit catalyzes the cyclization activity that produces IGP and AICAR from PRFAR using the ammonia provided by the HisH subunit. In Campylobacter hominis (strain ATCC BAA-381 / DSM 21671 / CCUG 45161 / LMG 19568 / NCTC 13146 / CH001A), this protein is Imidazole glycerol phosphate synthase subunit HisF.